A 346-amino-acid chain; its full sequence is Biotin synthase (346 aa).

Residues 38-256 (QQVQVSTLLS…IAVARIMMPT (219 aa)) form the Radical SAM core domain. [4Fe-4S] cluster contacts are provided by C53, C57, and C60. Residues C97, C128, C188, and R260 each coordinate [2Fe-2S] cluster.

Belongs to the radical SAM superfamily. Biotin synthase family. Homodimer. [4Fe-4S] cluster serves as cofactor. Requires [2Fe-2S] cluster as cofactor.

It carries out the reaction (4R,5S)-dethiobiotin + (sulfur carrier)-SH + 2 reduced [2Fe-2S]-[ferredoxin] + 2 S-adenosyl-L-methionine = (sulfur carrier)-H + biotin + 2 5'-deoxyadenosine + 2 L-methionine + 2 oxidized [2Fe-2S]-[ferredoxin]. Its pathway is cofactor biosynthesis; biotin biosynthesis; biotin from 7,8-diaminononanoate: step 2/2. In terms of biological role, catalyzes the conversion of dethiobiotin (DTB) to biotin by the insertion of a sulfur atom into dethiobiotin via a radical-based mechanism. This chain is Biotin synthase, found in Salmonella newport (strain SL254).